The chain runs to 363 residues: AA9 family lytic polysaccharide monooxygenase I (363 aa).

The N-terminal stretch at 1–19 (MSLFKFAAFVLGTAGSVAG) is a signal peptide. 2 residues coordinate Cu(2+): H20 and H105. 2 disulfide bridges follow: C75–C197 and C116–C120. Residues H183 and Q192 each contribute to the O2 site. Y194 provides a ligand contact to Cu(2+). Over residues 248 to 257 (GSDSNTATSG) the composition is skewed to polar residues. Disordered regions lie at residues 248 to 270 (GSDSNTATSGASPPSTNFSPTTT) and 298 to 363 (SVSY…RTQS). A compositionally biased stretch (low complexity) spans 258–270 (ASPPSTNFSPTTT). A compositionally biased stretch (polar residues) spans 298 to 307 (SVSYSQTPWP). A compositionally biased stretch (low complexity) spans 308–329 (SSTATEATSASSSAGGSNNGHT). The span at 342–354 (TGKKRSRLNRRRM) shows a compositional bias: basic residues.

The protein belongs to the polysaccharide monooxygenase AA9 family. Cu(2+) serves as cofactor.

Its subcellular location is the secreted. The catalysed reaction is [(1-&gt;4)-beta-D-glucosyl]n+m + reduced acceptor + O2 = 4-dehydro-beta-D-glucosyl-[(1-&gt;4)-beta-D-glucosyl]n-1 + [(1-&gt;4)-beta-D-glucosyl]m + acceptor + H2O.. Functionally, lytic polysaccharide monooxygenase (LPMO) that depolymerizes crystalline and amorphous polysaccharides via the oxidation of scissile alpha- or beta-(1-4)-glycosidic bonds, yielding C1 or C4 oxidation products. Catalysis by LPMOs requires the reduction of the active-site copper from Cu(II) to Cu(I) by a reducing agent and H(2)O(2) or O(2) as a cosubstrate. This is AA9 family lytic polysaccharide monooxygenase I from Emericella nidulans (strain FGSC A4 / ATCC 38163 / CBS 112.46 / NRRL 194 / M139) (Aspergillus nidulans).